The following is a 561-amino-acid chain: Malate synthase, glyoxysomal (561 aa).

Arginine 177 functions as the Proton acceptor in the catalytic mechanism. Catalysis depends on aspartate 462, which acts as the Proton donor. A Microbody targeting signal motif is present at residues 559 to 561 (SRL).

The protein belongs to the malate synthase family.

The protein resides in the glyoxysome. It carries out the reaction glyoxylate + acetyl-CoA + H2O = (S)-malate + CoA + H(+). It functions in the pathway carbohydrate metabolism; glyoxylate cycle; (S)-malate from isocitrate: step 2/2. The sequence is that of Malate synthase, glyoxysomal from Brassica napus (Rape).